Reading from the N-terminus, the 569-residue chain is Proline--tRNA ligase (569 aa).

It belongs to the class-II aminoacyl-tRNA synthetase family. ProS type 1 subfamily. As to quaternary structure, homodimer.

It localises to the cytoplasm. The catalysed reaction is tRNA(Pro) + L-proline + ATP = L-prolyl-tRNA(Pro) + AMP + diphosphate. Functionally, catalyzes the attachment of proline to tRNA(Pro) in a two-step reaction: proline is first activated by ATP to form Pro-AMP and then transferred to the acceptor end of tRNA(Pro). As ProRS can inadvertently accommodate and process non-cognate amino acids such as alanine and cysteine, to avoid such errors it has two additional distinct editing activities against alanine. One activity is designated as 'pretransfer' editing and involves the tRNA(Pro)-independent hydrolysis of activated Ala-AMP. The other activity is designated 'posttransfer' editing and involves deacylation of mischarged Ala-tRNA(Pro). The misacylated Cys-tRNA(Pro) is not edited by ProRS. In Legionella pneumophila subsp. pneumophila (strain Philadelphia 1 / ATCC 33152 / DSM 7513), this protein is Proline--tRNA ligase.